Consider the following 20-residue polypeptide: Pregnancy-associated glycoprotein 57 (20 aa).

This sequence belongs to the peptidase A1 family. Glycosylated.

It is found in the secreted. The sequence is that of Pregnancy-associated glycoprotein 57 from Ovis aries (Sheep).